The primary structure comprises 298 residues: DegV domain-containing protein UU535 (298 aa).

Residues 5-287 enclose the DegV domain; that stretch reads FLIMTDSSTT…KGALGIQVIA (283 aa). Residues Ser65 and Ser96 each contribute to the hexadecanoate site.

Functionally, may bind long-chain fatty acids, such as palmitate, and may play a role in lipid transport or fatty acid metabolism. The polypeptide is DegV domain-containing protein UU535 (Ureaplasma parvum serovar 3 (strain ATCC 700970)).